A 213-amino-acid chain; its full sequence is Thymidylate kinase (213 aa).

G9–T16 provides a ligand contact to ATP.

The protein belongs to the thymidylate kinase family.

The enzyme catalyses dTMP + ATP = dTDP + ADP. Functionally, phosphorylation of dTMP to form dTDP in both de novo and salvage pathways of dTTP synthesis. The sequence is that of Thymidylate kinase from Geobacter sulfurreducens (strain ATCC 51573 / DSM 12127 / PCA).